A 398-amino-acid polypeptide reads, in one-letter code: Putative F-box/kelch-repeat protein At2g29780 (398 aa).

The disordered stretch occupies residues 1–46; the sequence is MAIISETSDDGSHGGVPNKKPEELHKNPKEDDHQEEEVENHPPIPR. Residues 19 to 32 are compositionally biased toward basic and acidic residues; that stretch reads KKPEELHKNPKEDD. In terms of domain architecture, F-box spans 43–90; it reads PIPRQIPQALIRRTVALIKRCHYPSLSLLSKAFRIVISSPELHQTRSS. Kelch repeat units lie at residues 148-195, 196-241, 243-289, and 295-342; these read KMYV…VING, KIYV…GFVT, VVMQ…VIED, and DPYC…GGKL.

This Arabidopsis thaliana (Mouse-ear cress) protein is Putative F-box/kelch-repeat protein At2g29780.